Reading from the N-terminus, the 226-residue chain is X-linked lymphocyte-regulated protein 3A (226 aa).

Residues 1-18 (MSSRERKATDTAGRHSRM) show a composition bias toward basic and acidic residues. The disordered stretch occupies residues 1 to 72 (MSSRERKATD…QDLVQEFEEP (72 aa)). Over residues 21 to 30 (NLSSDDSQNP) the composition is skewed to polar residues. Basic and acidic residues-rich tracts occupy residues 39-48 (EVLDAGREDI) and 56-65 (QQARKEKQDL). Residues 155-210 (ETLTLQKNRMEEFKSLCEKYLEKLEVLRDSRGNSIAEELRRLIATLEIKLLMLHNQ) are a coiled coil.

Belongs to the XLR/SYCP3 family. As to expression, expressed in lymphoid cells.

This chain is X-linked lymphocyte-regulated protein 3A (Xlr3a), found in Mus musculus (Mouse).